A 264-amino-acid polypeptide reads, in one-letter code: Thymidylate synthase (264 aa).

Residues R21 and 126–127 each bind dUMP; that span reads RR. C146 (nucleophile) is an active-site residue. DUMP contacts are provided by residues 166–169, N177, and 207–209; these read RSAD and HLY. D169 provides a ligand contact to (6R)-5,10-methylene-5,6,7,8-tetrahydrofolate. A263 lines the (6R)-5,10-methylene-5,6,7,8-tetrahydrofolate pocket.

The protein belongs to the thymidylate synthase family. Bacterial-type ThyA subfamily. In terms of assembly, homodimer.

It localises to the cytoplasm. The catalysed reaction is dUMP + (6R)-5,10-methylene-5,6,7,8-tetrahydrofolate = 7,8-dihydrofolate + dTMP. The protein operates within pyrimidine metabolism; dTTP biosynthesis. Catalyzes the reductive methylation of 2'-deoxyuridine-5'-monophosphate (dUMP) to 2'-deoxythymidine-5'-monophosphate (dTMP) while utilizing 5,10-methylenetetrahydrofolate (mTHF) as the methyl donor and reductant in the reaction, yielding dihydrofolate (DHF) as a by-product. This enzymatic reaction provides an intracellular de novo source of dTMP, an essential precursor for DNA biosynthesis. This Bradyrhizobium diazoefficiens (strain JCM 10833 / BCRC 13528 / IAM 13628 / NBRC 14792 / USDA 110) protein is Thymidylate synthase.